A 319-amino-acid chain; its full sequence is ATP-dependent 6-phosphofructokinase (319 aa).

G11 lines the ATP pocket. Residue 21-25 (RAVVR) participates in ADP binding. Residues 72–73 (RC) and 102–105 (GDGS) each bind ATP. D103 provides a ligand contact to Mg(2+). 125 to 127 (TID) lines the substrate pocket. The Proton acceptor role is filled by D127. R154 provides a ligand contact to ADP. 169–171 (MGR) provides a ligand contact to substrate. ADP is bound by residues 185–187 (GAE), R211, and 213–215 (KKH). Residues E222, R243, and 249–252 (HIQR) contribute to the substrate site.

This sequence belongs to the phosphofructokinase type A (PFKA) family. ATP-dependent PFK group I subfamily. Prokaryotic clade 'B1' sub-subfamily. In terms of assembly, homotetramer. Requires Mg(2+) as cofactor.

It localises to the cytoplasm. It catalyses the reaction beta-D-fructose 6-phosphate + ATP = beta-D-fructose 1,6-bisphosphate + ADP + H(+). It participates in carbohydrate degradation; glycolysis; D-glyceraldehyde 3-phosphate and glycerone phosphate from D-glucose: step 3/4. Its activity is regulated as follows. Allosterically activated by ADP and other diphosphonucleosides, and allosterically inhibited by phosphoenolpyruvate. Its function is as follows. Catalyzes the phosphorylation of D-fructose 6-phosphate to fructose 1,6-bisphosphate by ATP, the first committing step of glycolysis. This is ATP-dependent 6-phosphofructokinase from Lysinibacillus sphaericus (Bacillus sphaericus).